A 580-amino-acid chain; its full sequence is Arginine--tRNA ligase (580 aa).

Residues 127–137 (PNTHKELHVGH) carry the 'HIGH' region motif.

The protein belongs to the class-I aminoacyl-tRNA synthetase family. Monomer.

It is found in the cytoplasm. It carries out the reaction tRNA(Arg) + L-arginine + ATP = L-arginyl-tRNA(Arg) + AMP + diphosphate. The chain is Arginine--tRNA ligase from Bdellovibrio bacteriovorus (strain ATCC 15356 / DSM 50701 / NCIMB 9529 / HD100).